We begin with the raw amino-acid sequence, 289 residues long: Acetylglutamate kinase (289 aa).

Residues 60-61 (GG), Arg82, and Asn182 contribute to the substrate site.

It belongs to the acetylglutamate kinase family. ArgB subfamily.

The protein localises to the cytoplasm. It catalyses the reaction N-acetyl-L-glutamate + ATP = N-acetyl-L-glutamyl 5-phosphate + ADP. The protein operates within amino-acid biosynthesis; L-arginine biosynthesis; N(2)-acetyl-L-ornithine from L-glutamate: step 2/4. Catalyzes the ATP-dependent phosphorylation of N-acetyl-L-glutamate. This Methanothrix thermoacetophila (strain DSM 6194 / JCM 14653 / NBRC 101360 / PT) (Methanosaeta thermophila) protein is Acetylglutamate kinase.